A 247-amino-acid chain; its full sequence is 7-carboxy-7-deazaguanine synthase (247 aa).

Substrate-binding positions include I15–G17 and R30. A Radical SAM core domain is found at L21–R247. Residues C34, C38, and C41 each contribute to the [4Fe-4S] cluster site. Position 43 (T43) interacts with Mg(2+). T78 serves as a coordination point for substrate. Residue G80 participates in S-adenosyl-L-methionine binding.

Belongs to the radical SAM superfamily. 7-carboxy-7-deazaguanine synthase family. In terms of assembly, homodimer. It depends on [4Fe-4S] cluster as a cofactor. Requires S-adenosyl-L-methionine as cofactor. Mg(2+) is required as a cofactor.

It catalyses the reaction 6-carboxy-5,6,7,8-tetrahydropterin + H(+) = 7-carboxy-7-deazaguanine + NH4(+). It participates in purine metabolism; 7-cyano-7-deazaguanine biosynthesis. Catalyzes the complex heterocyclic radical-mediated conversion of 6-carboxy-5,6,7,8-tetrahydropterin (CPH4) to 7-carboxy-7-deazaguanine (CDG), a step common to the biosynthetic pathways of all 7-deazapurine-containing compounds. The protein is 7-carboxy-7-deazaguanine synthase of Methanothermobacter thermautotrophicus (strain ATCC 29096 / DSM 1053 / JCM 10044 / NBRC 100330 / Delta H) (Methanobacterium thermoautotrophicum).